The chain runs to 278 residues: 4-hydroxy-tetrahydrodipicolinate reductase (278 aa).

Residues 16 to 21 (GAGGRM) and glutamate 42 each bind NAD(+). An NADP(+)-binding site is contributed by arginine 43. NAD(+) contacts are provided by residues 106–108 (GTT) and 130–133 (AGNY). Residue histidine 163 is the Proton donor/acceptor of the active site. Histidine 164 is a binding site for (S)-2,3,4,5-tetrahydrodipicolinate. Catalysis depends on lysine 167, which acts as the Proton donor. 173-174 (GT) contacts (S)-2,3,4,5-tetrahydrodipicolinate.

It belongs to the DapB family.

Its subcellular location is the cytoplasm. The enzyme catalyses (S)-2,3,4,5-tetrahydrodipicolinate + NAD(+) + H2O = (2S,4S)-4-hydroxy-2,3,4,5-tetrahydrodipicolinate + NADH + H(+). It catalyses the reaction (S)-2,3,4,5-tetrahydrodipicolinate + NADP(+) + H2O = (2S,4S)-4-hydroxy-2,3,4,5-tetrahydrodipicolinate + NADPH + H(+). The protein operates within amino-acid biosynthesis; L-lysine biosynthesis via DAP pathway; (S)-tetrahydrodipicolinate from L-aspartate: step 4/4. In terms of biological role, catalyzes the conversion of 4-hydroxy-tetrahydrodipicolinate (HTPA) to tetrahydrodipicolinate. The protein is 4-hydroxy-tetrahydrodipicolinate reductase of Psychrobacter arcticus (strain DSM 17307 / VKM B-2377 / 273-4).